We begin with the raw amino-acid sequence, 325 residues long: MSVRSVIRGSGSALPRRAVSNAEMTTMVDTTDEWIVERTGIRNRYIAGEGETTSTLATEAARKALEAAGVDASRIDLIVLATATPDQTFPATATIVQHNLGCNGGIAFDVAAVCSGFLYALATADSMIRSGMARCALVIGAETMSRLLDWEDRTTCVLFGDGAGAVVLEAVDVDETDPKAPGILATRLHADGAHNELLYVDGGPSTTGTVGKLRMKGREVFRHAVTNLANVLKEVLETTGHDAEEIDWVVPHQANFRILDATARKLDLPADKVIVTVDHHANTSAASVPLAYDTAVRDGRIKPGDLVMFEAMGGGFTWGASLARV.

Catalysis depends on residues Cys-114 and His-252. An ACP-binding region spans residues 253 to 257 (QANFR). Asn-282 is a catalytic residue.

Belongs to the thiolase-like superfamily. FabH family. Homodimer.

It localises to the cytoplasm. It carries out the reaction malonyl-[ACP] + acetyl-CoA + H(+) = 3-oxobutanoyl-[ACP] + CO2 + CoA. It functions in the pathway lipid metabolism; fatty acid biosynthesis. Functionally, catalyzes the condensation reaction of fatty acid synthesis by the addition to an acyl acceptor of two carbons from malonyl-ACP. Catalyzes the first condensation reaction which initiates fatty acid synthesis and may therefore play a role in governing the total rate of fatty acid production. Possesses both acetoacetyl-ACP synthase and acetyl transacylase activities. Its substrate specificity determines the biosynthesis of branched-chain and/or straight-chain of fatty acids. This is Beta-ketoacyl-[acyl-carrier-protein] synthase III from Novosphingobium aromaticivorans (strain ATCC 700278 / DSM 12444 / CCUG 56034 / CIP 105152 / NBRC 16084 / F199).